We begin with the raw amino-acid sequence, 139 residues long: Nucleoside diphosphate kinase (139 aa).

Residues K10, F58, R86, T92, R103, and N113 each coordinate ATP. The Pros-phosphohistidine intermediate role is filled by H116.

This sequence belongs to the NDK family. Homotetramer. Requires Mg(2+) as cofactor.

The protein localises to the cytoplasm. It catalyses the reaction a 2'-deoxyribonucleoside 5'-diphosphate + ATP = a 2'-deoxyribonucleoside 5'-triphosphate + ADP. The enzyme catalyses a ribonucleoside 5'-diphosphate + ATP = a ribonucleoside 5'-triphosphate + ADP. Major role in the synthesis of nucleoside triphosphates other than ATP. The ATP gamma phosphate is transferred to the NDP beta phosphate via a ping-pong mechanism, using a phosphorylated active-site intermediate. The chain is Nucleoside diphosphate kinase from Caulobacter vibrioides (strain ATCC 19089 / CIP 103742 / CB 15) (Caulobacter crescentus).